The following is a 368-amino-acid chain: Probable magnesium transporter (368 aa).

The Extracellular segment spans residues Met1–Lys4. Residues Tyr5–Thr25 traverse the membrane as a helical segment. Topologically, residues Lys26–Asn50 are cytoplasmic. A helical membrane pass occupies residues Pro51–Tyr71. The Extracellular segment spans residues Thr72–Ala76. The chain crosses the membrane as a helical span at residues Ile77–Phe97. Over Leu98 to Arg101 the chain is Cytoplasmic. A helical membrane pass occupies residues Leu102–Leu122. Residues His123–Pro143 lie on the Extracellular side of the membrane. Residues Gly144–Val164 form a helical membrane-spanning segment. At Pro165–Tyr175 the chain is on the cytoplasmic side. The chain crosses the membrane as a helical span at residues Leu176–Ala196. Residues Leu197–Gln206 are Extracellular-facing. A helical membrane pass occupies residues Phe207 to Met227. At Asn228–Ser240 the chain is on the cytoplasmic side. The chain crosses the membrane as a helical span at residues Ile241–Leu261. Topologically, residues Phe262–Ser269 are extracellular. A glycan (N-linked (GlcNAc...) asparagine) is linked at Asn266. The helical transmembrane segment at Ala270–Leu290 threads the bilayer. Residues Asn291–His368 lie on the Cytoplasmic side of the membrane.

Belongs to the NIPA family.

It is found in the cell membrane. It localises to the early endosome. The enzyme catalyses Mg(2+)(in) = Mg(2+)(out). Probably acts as a selective Mg(2+) transporter. Plays a role in cell wall integrity and in engulfment by host macrophages. The chain is Probable magnesium transporter from Candida albicans (strain SC5314 / ATCC MYA-2876) (Yeast).